A 172-amino-acid polypeptide reads, in one-letter code: Adenine phosphoribosyltransferase (172 aa).

It belongs to the purine/pyrimidine phosphoribosyltransferase family. Homodimer.

Its subcellular location is the cytoplasm. The enzyme catalyses AMP + diphosphate = 5-phospho-alpha-D-ribose 1-diphosphate + adenine. It functions in the pathway purine metabolism; AMP biosynthesis via salvage pathway; AMP from adenine: step 1/1. Catalyzes a salvage reaction resulting in the formation of AMP, that is energically less costly than de novo synthesis. This Streptococcus thermophilus (strain ATCC BAA-250 / LMG 18311) protein is Adenine phosphoribosyltransferase.